We begin with the raw amino-acid sequence, 402 residues long: Acetylornithine aminotransferase (402 aa).

Pyridoxal 5'-phosphate is bound by residues 117 to 118 (GA) and F143. R146 serves as a coordination point for N(2)-acetyl-L-ornithine. Position 231-234 (231-234 (DEVQ)) interacts with pyridoxal 5'-phosphate. K260 bears the N6-(pyridoxal phosphate)lysine mark. A N(2)-acetyl-L-ornithine-binding site is contributed by T288. T289 contributes to the pyridoxal 5'-phosphate binding site.

The protein belongs to the class-III pyridoxal-phosphate-dependent aminotransferase family. ArgD subfamily. In terms of assembly, homodimer. It depends on pyridoxal 5'-phosphate as a cofactor.

Its subcellular location is the cytoplasm. The enzyme catalyses N(2)-acetyl-L-ornithine + 2-oxoglutarate = N-acetyl-L-glutamate 5-semialdehyde + L-glutamate. It participates in amino-acid biosynthesis; L-arginine biosynthesis; N(2)-acetyl-L-ornithine from L-glutamate: step 4/4. The chain is Acetylornithine aminotransferase from Corynebacterium efficiens (strain DSM 44549 / YS-314 / AJ 12310 / JCM 11189 / NBRC 100395).